The chain runs to 832 residues: Subtilisin-like protease SBT2.4 (832 aa).

Residues 1-27 (METNPRKLRSYSYICLIVCIFVLVVCA) form the signal peptide. The region spanning 74-138 (EAKKIEEIHD…VEEDKGVKLM (65 aa)) is the Inhibitor I9 domain. Positions 150–690 (QQVWQKISNE…AGHVNPARAL (541 aa)) constitute a Peptidase S8 domain. The active-site Charge relay system is Asp174. N-linked (GlcNAc...) asparagine glycans are attached at residues Asn196 and Asn238. The active-site Charge relay system is the His252. Residues 425–524 (TNGSVLQPLT…SAAQIILRYY (100 aa)) form the PA domain. A glycan (N-linked (GlcNAc...) asparagine) is linked at Asn426. Ser618 functions as the Charge relay system in the catalytic mechanism. N-linked (GlcNAc...) asparagine glycosylation is found at Asn761, Asn774, and Asn800.

The protein belongs to the peptidase S8 family.

The protein resides in the secreted. Serine protease required for epidermal surface formation in embryos and juvenile plants. Involved in embryonic cuticle formation downstream of BHLH95/ZOU. The chain is Subtilisin-like protease SBT2.4 from Arabidopsis thaliana (Mouse-ear cress).